The following is a 219-amino-acid chain: Tritrans,polycis-undecaprenyl-diphosphate synthase (geranylgeranyl-diphosphate specific) (219 aa).

The active site involves aspartate 12. Aspartate 12 provides a ligand contact to Mg(2+). Substrate contacts are provided by residues 13–16 (GNRR), tryptophan 17, and 59–61 (SRD). Asparagine 62 serves as the catalytic Proton acceptor. Substrate is bound by residues arginine 66, arginine 168, and 174 to 176 (RLS). Glutamate 187 provides a ligand contact to Mg(2+).

Belongs to the UPP synthase family. In terms of assembly, homodimer. Mg(2+) serves as cofactor.

The enzyme catalyses geranylgeranyl diphosphate + 7 isopentenyl diphosphate = tri-trans,hepta-cis-undecaprenyl diphosphate + 7 diphosphate. Its function is as follows. Catalyzes the sequential condensation of isopentenyl diphosphate (IPP) with geranylgeranyl diphosphate (GGPP) to yield (2Z,6Z,10Z,14Z,18Z,22Z,26Z,30E,34E,38E)-undecaprenyl diphosphate (tritrans,heptacis-UPP). It is probably the precursor of glycosyl carrier lipids. The polypeptide is Tritrans,polycis-undecaprenyl-diphosphate synthase (geranylgeranyl-diphosphate specific) (Aeropyrum pernix (strain ATCC 700893 / DSM 11879 / JCM 9820 / NBRC 100138 / K1)).